The sequence spans 355 residues: RNA 3'-terminal phosphate cyclase (355 aa).

Residues Gln109 and 291–295 (HLADQ) contribute to the ATP site. Residue His316 is the Tele-AMP-histidine intermediate of the active site.

The protein belongs to the RNA 3'-terminal cyclase family. Type 1 subfamily.

Its subcellular location is the cytoplasm. It carries out the reaction a 3'-end 3'-phospho-ribonucleotide-RNA + ATP = a 3'-end 2',3'-cyclophospho-ribonucleotide-RNA + AMP + diphosphate. Its function is as follows. Catalyzes the conversion of 3'-phosphate to a 2',3'-cyclic phosphodiester at the end of RNA. The mechanism of action of the enzyme occurs in 3 steps: (A) adenylation of the enzyme by ATP; (B) transfer of adenylate to an RNA-N3'P to produce RNA-N3'PP5'A; (C) and attack of the adjacent 2'-hydroxyl on the 3'-phosphorus in the diester linkage to produce the cyclic end product. The biological role of this enzyme is unknown but it is likely to function in some aspects of cellular RNA processing. The chain is RNA 3'-terminal phosphate cyclase from Koribacter versatilis (strain Ellin345).